Reading from the N-terminus, the 607-residue chain is MNKEERAKRQSKIRNFSIIAHIDHGKSTLADRILEKTNALTQREMKAQLLDSMDLERERGITIKLNAVQLNYKAKDGEEYILHLIDTPGHVDFTYEVSRSLAACEGAILVVDAAQGIEAQTLANVYLALDNNLEILPVINKIDLPSADPERVRQEVEDVIGLDASEAVLASAKAGIGIEEILEQIVEKVPAPTGDSEEPLQCMIFDSLYDPYRGVIAYIRVVNGTVKVGDKVRMMATGKEFEVTEVGVFTPKTTQRDELTVGDVGFLAASIKNVGDTRVGDTITHAKRPAAEPLPGYRKLNPMVFCGLYPIDSARYNDLRDALEKLELNDSALEFEPETSQALGFGFRCGFLGLLHMEIIQERIEREFKIDLITTAPSVIYKVFLTNGEDMIVDNPSNMPDPQTIDRVEEPFVKAAIMVPNDYVGAVMEICQGKRGTFIDMQYLDETRVTLTYEIPLSEIVYDFFDQLKSNTKGYASFDYELIGYKPSKLVKMDILLNSEQVDALSFIVHRDSAYDRGKVIVEKLKELIPRQQFEVPIQATIGNKVVARSTIKAMRKNVLAKCYGGDISRKRKLLDKQKEGKKRMKSVGSVEVPQEAFMAVLKMDDN.

In terms of domain architecture, tr-type G spans 11-193 (SKIRNFSIIA…QIVEKVPAPT (183 aa)). GTP-binding positions include 23 to 28 (DHGKST) and 140 to 143 (NKID).

It belongs to the TRAFAC class translation factor GTPase superfamily. Classic translation factor GTPase family. LepA subfamily.

The protein resides in the cell membrane. The enzyme catalyses GTP + H2O = GDP + phosphate + H(+). Its function is as follows. Required for accurate and efficient protein synthesis under certain stress conditions. May act as a fidelity factor of the translation reaction, by catalyzing a one-codon backward translocation of tRNAs on improperly translocated ribosomes. Back-translocation proceeds from a post-translocation (POST) complex to a pre-translocation (PRE) complex, thus giving elongation factor G a second chance to translocate the tRNAs correctly. Binds to ribosomes in a GTP-dependent manner. The chain is Elongation factor 4 from Bacillus cereus (strain ATCC 10987 / NRS 248).